The following is a 305-amino-acid chain: Dermonecrotic toxin LrSicTox-alphaIA1ii (305 aa).

Residues 1–18 (MLLYVTLILGCWSAFSES) form the signal peptide. The propeptide occupies 19–26 (AETDVAER). Histidine 37 is an active-site residue. Mg(2+)-binding residues include glutamate 57 and aspartate 59. The Nucleophile role is filled by histidine 73. 2 disulfides stabilise this stretch: cysteine 77–cysteine 83 and cysteine 79–cysteine 222. Aspartate 117 lines the Mg(2+) pocket. Asparagine 282 is a glycosylation site (N-linked (GlcNAc...) asparagine).

This sequence belongs to the arthropod phospholipase D family. Class II subfamily. Class IIa sub-subfamily. Requires Mg(2+) as cofactor. As to expression, expressed by the venom gland.

It is found in the secreted. The catalysed reaction is an N-(acyl)-sphingosylphosphocholine = an N-(acyl)-sphingosyl-1,3-cyclic phosphate + choline. It catalyses the reaction an N-(acyl)-sphingosylphosphoethanolamine = an N-(acyl)-sphingosyl-1,3-cyclic phosphate + ethanolamine. It carries out the reaction a 1-acyl-sn-glycero-3-phosphocholine = a 1-acyl-sn-glycero-2,3-cyclic phosphate + choline. The enzyme catalyses a 1-acyl-sn-glycero-3-phosphoethanolamine = a 1-acyl-sn-glycero-2,3-cyclic phosphate + ethanolamine. Inhibited with low affinity by edelfosine. Functionally, dermonecrotic toxins cleave the phosphodiester linkage between the phosphate and headgroup of certain phospholipids (sphingolipid and lysolipid substrates), forming an alcohol (often choline) and a cyclic phosphate. This toxin acts on sphingomyelin (SM). It also acts on a broad range of lysophospholipids, like lysophosphatidylinositol (LPI), lysophosphatidylglycerol (LPG), lysophosphatidylethanolamine (LPE), lysobisphosphatidic acid (LBPA), lysophosphatidylserine (LPS) and lysophosphatidylcholines (LPC) of varying chain lengths. The substrate preference is LPI &gt; LPG &gt; LPS &gt; LPC &gt;&gt; LPE, LBPA. Furthermore, the enzyme also act on cyclic phosphatidic acid and lyso-platelet activating factor (LPAF, an alkyl-LPC). The enzyme does not act on sphingosylphosphorylcholine (SPC, also known as lyso-sphingomyelin) and PAF. The toxin may also act on ceramide phosphoethanolamine (CPE). It acts by transphosphatidylation, releasing exclusively cyclic phosphate products as second products. It does not exhibit detectable PLA1/2 activity. It induces dose-dependent hemolysis and dermonecrosis. Also induces increased vascular permeability, edema, inflammatory response, and platelet aggregation. The chain is Dermonecrotic toxin LrSicTox-alphaIA1ii from Loxosceles reclusa (Brown recluse spider).